The primary structure comprises 380 residues: Polygalacturonase 2 (380 aa).

The N-terminal stretch at 1-20 (MIAGSKLLMLGLFGALAVHA) is a signal peptide. Residues 21–38 (LPEPAKAQVTAAPKLEER) constitute a propeptide that is removed on maturation. The cysteines at positions 42 and 60 are disulfide-linked. 2 PbH1 repeats span residues 173–204 (ATDL…DVGS) and 205–226 (STGI…AVNS). The active-site Proton donor is D219. The cysteines at positions 221 and 237 are disulfide-linked. H241 is an active-site residue. PbH1 repeat units follow at residues 256–277 (VANV…RIKT), 285–307 (VKNV…VIEQ), and 319–364 (TDGV…SVSG). N287 is a glycosylation site (N-linked (GlcNAc...) asparagine). Intrachain disulfides connect C347/C352 and C371/C380.

The protein belongs to the glycosyl hydrolase 28 family.

Its subcellular location is the secreted. It catalyses the reaction (1,4-alpha-D-galacturonosyl)n+m + H2O = (1,4-alpha-D-galacturonosyl)n + (1,4-alpha-D-galacturonosyl)m.. This chain is Polygalacturonase 2 (PG2), found in Penicillium olsonii.